The following is a 155-amino-acid chain: MSQVILDLQLACEDNSGLPEESQFQTWLNAVIPQFQEESEVTIRVVDTAESHSLNLIYRGKDKPTNVLSFPFEVPPGMEMSLLGDLVICRQVVEKEAQEQGKPLEAHWAHMVVHGSLHLLGYDHIEDDEAEEMEALETEIMLALGYEDPYIAEKE.

Zn(2+) is bound by residues histidine 114, histidine 118, and histidine 124.

Belongs to the endoribonuclease YbeY family. Requires Zn(2+) as cofactor.

The protein resides in the cytoplasm. Functionally, single strand-specific metallo-endoribonuclease involved in late-stage 70S ribosome quality control and in maturation of the 3' terminus of the 16S rRNA. This is Endoribonuclease YbeY from Escherichia coli O17:K52:H18 (strain UMN026 / ExPEC).